The primary structure comprises 492 residues: Myocyte-specific enhancer factor 2A (492 aa).

The MADS-box domain occupies 3–57; it reads RKKIQITRIMDERNRQVTFTKRKFGLMKKAYELSVLCDCEIALIIFNSSNKLFQY. The segment at residues 58-86 is a DNA-binding region (mef2-type); that stretch reads ASTDMDKVLLKYTEYNEPHESRTNSDIVE. The residue at position 59 (serine 59) is a Phosphoserine; by CK2. Serine 98 carries the post-translational modification Phosphoserine. The segment at 183-227 is disordered; the sequence is PQATLHRNVSPGAPQRPPSTGSAGGMLSTSDLTVPNGAGSSPVGN. The segment covering 209-227 has biased composition (polar residues); the sequence is LSTSDLTVPNGAGSSPVGN. Position 235 is a phosphoserine (serine 235). The segment at 242–270 is disordered; that stretch reads TGANSLGKVMPTKSPPPPGGGSLGMNSRK. The residue at position 249 (lysine 249) is an N6-acetyllysine. Serine 255 is modified (phosphoserine). Positions 266-283 are required for interaction with MAPKs; it reads MNSRKPDLRVVIPPSSKG. Threonine 304 and threonine 311 each carry phosphothreonine; by MAPK7 and MAPK14. Phosphoserine; by MAPK7 is present on serine 347. A compositionally biased stretch (polar residues) spans 382-394; that stretch reads SNLSINTNQNINI. Residues 382–492 form a disordered region; that stretch reads SNLSINTNQN…KRMRMDAWVT (111 aa). The residue at position 395 (lysine 395) is an N6-acetyllysine; alternate. A Glycyl lysine isopeptide (Lys-Gly) (interchain with G-Cter in SUMO); alternate cross-link involves residue lysine 395. At serine 400 the chain carries Phosphoserine; by CDK5. At threonine 407 the chain carries Phosphothreonine. Residues 417–430 show a composition bias toward pro residues; it reads PQPPPPPPQAPQPQ. Serine 438 bears the Phosphoserine; by MAPK mark. The segment covering 438–451 has biased composition (low complexity); that stretch reads SPVDSLSSSSSSYD. 2 stretches are compositionally biased toward basic and acidic residues: residues 452–462 and 473–492; these read GSDREDPRGDF and NSEDRESPSVKRMRMDAWVT.

Binds DNA as a homo- or heterodimer. Dimerizes with MEF2D. Interacts with HDAC7. Interacts with PIAS1; the interaction enhances sumoylation. Interacts with HDAC4, HDAC9 and SLC2A4RG. Interacts (via the N-terminal) with MAPK7; the interaction results in the phosphorylation and transcriptional activity of MEF2A. Post-translationally, constitutive phosphorylation on Ser-400 promotes Lys-395 sumoylation thus preventing acetylation at this site. Dephosphorylation on Ser-400 by PPP3CA upon neuron depolarization promotes a switch from sumoylation to acetylation on residue Lys-395 leading to inhibition of dendrite claw differentiation. Phosphorylation on Thr-304 and Thr-311 are the main sites involved in p38 MAPK signaling and activate transcription. Phosphorylated on these sites by MAPK14/p38alpha and MAPK11/p38beta, but not by MAPK13/p38delta nor by MAPK12/p38gamma. Phosphorylation on Ser-400 by CDK5 induced by neurotoxicity inhibits MEF2A transcriptional activation leading to apoptosis of cortical neurons. Phosphorylation on Thr-304, Thr-311 and Ser-347 can be induced by EGF. In terms of processing, sumoylation on Lys-395 is enhanced by PIAS1 and represses transcriptional activity. Phosphorylation on Ser-400 is required for sumoylation. Has no effect on nuclear location nor on DNA binding. Sumoylated with SUMO1 and, to a lesser extent with SUMO2 and SUMO3. PIASx facilitates sumoylation in postsynaptic dendrites in the cerebellar cortex and promotes their morphogenesis. Acetylation on Lys-395 activates transcriptional activity. Acetylated by p300 on several sites in diffentiating myocytes. Acetylation on Lys-4 increases DNA binding and transactivation. Hyperacetylation by p300 leads to enhanced cardiac myocyte growth and heart failure. Post-translationally, proteolytically cleaved in cerebellar granule neurons on several sites by caspase 3 and caspase 7 following neurotoxicity. Preferentially cleaves the CDK5-mediated hyperphosphorylated form which leads to neuron apoptosis and transcriptional inactivation.

The protein localises to the nucleus. In terms of biological role, transcriptional activator which binds specifically to the MEF2 element, 5'-YTA[AT](4)TAR-3', found in numerous muscle-specific genes. Also involved in the activation of numerous growth factor- and stress-induced genes. Mediates cellular functions not only in skeletal and cardiac muscle development, but also in neuronal differentiation and survival. Plays diverse roles in the control of cell growth, survival and apoptosis via p38 MAPK signaling in muscle-specific and/or growth factor-related transcription. In cerebellar granule neurons, phosphorylated and sumoylated MEF2A represses transcription of NUR77 promoting synaptic differentiation. Associates with chromatin to the ZNF16 promoter. This Bos taurus (Bovine) protein is Myocyte-specific enhancer factor 2A (MEF2A).